We begin with the raw amino-acid sequence, 636 residues long: Nucleolin 2 (636 aa).

Disordered stretches follow at residues 1–386 (MGKS…SKTL), 458–481 (ANER…SRTI), and 544–636 (SEIG…NDEE). 2 stretches are compositionally biased toward basic and acidic residues: residues 43-63 (KELI…KKVE) and 76-89 (EKTK…KDES). A compositionally biased stretch (acidic residues) spans 90–103 (SSEEEDDSSSDEEI). Basic and acidic residues predominate over residues 104–118 (APAKKRPEPIKKAKV). Composition is skewed to acidic residues over residues 122–133 (SSDDDSTSDEET), 152–163 (SSDDDSSSDEET), and 182–193 (SSDDDSSSDEET). The span at 224–238 (TPAKKEPIVVKKDSS) shows a compositional bias: basic and acidic residues. Acidic residues-rich tracts occupy residues 267–278 (SSEEESSSDDEP), 299–311 (SSEE…ESDD), and 331–341 (SSDESSDESDK). Positions 342 to 367 (EESKDEKVTPKKKDSDVEMVDAEQKS) are enriched in basic and acidic residues. The segment covering 368–383 (NAKQPKTPTNQTQGGS) has biased composition (polar residues). RRM domains follow at residues 384–460 (KTLF…LANE) and 479–558 (RTIY…ESRP). The segment covering 464 to 481 (PRNSNPGRKGEGSQSRTI) has biased composition (polar residues). 2 stretches are compositionally biased toward basic and acidic residues: residues 552–566 (HVEE…EGRS) and 579–604 (RHSD…DRGA). A compositionally biased stretch (polar residues) spans 622 to 636 (MESSKGTKTVFNDEE).

As to quaternary structure, interacts with THAL in the nucleus. Expressed at low levels in flower buds.

It is found in the nucleus. The protein resides in the nucleolus. Its function is as follows. Involved in pre-rRNA processing and ribosome assembly. The polypeptide is Nucleolin 2 (Arabidopsis thaliana (Mouse-ear cress)).